Here is a 609-residue protein sequence, read N- to C-terminus: Protein kinase PVPK-1 (609 aa).

Over residues 1-19 (MESSVNGVDSLSEVQNSVS) the composition is skewed to polar residues. 2 disordered regions span residues 1–51 (MESS…GHQT) and 80–100 (PTKL…EPNG). The Protein kinase domain occupies 229–565 (FRLLKKLGCG…ATEIKQHPFF (337 aa)). ATP contacts are provided by residues 235 to 243 (LGCGDIGSV) and Lys258. Asp354 serves as the catalytic Proton acceptor. Residues 429 to 448 (GKSKKDKKSKPKNDMHNQVT) form a disordered region.

Belongs to the protein kinase superfamily. Ser/Thr protein kinase family.

It carries out the reaction L-seryl-[protein] + ATP = O-phospho-L-seryl-[protein] + ADP + H(+). It catalyses the reaction L-threonyl-[protein] + ATP = O-phospho-L-threonyl-[protein] + ADP + H(+). In Phaseolus vulgaris (Kidney bean), this protein is Protein kinase PVPK-1.